Consider the following 910-residue polypeptide: MDDRGRRCCTHSGVIALDIEAKWQNAWDRDGIFVPKMDGRKKFMITVPWPYTNGSLHVGHGRTYTLGDIIARYKRSRNYNVLFPMGFHQSGTPILAFSERIRAGDRSTIDLYTSYLKEYGEKDIDALIESFKDPKNIADYFSNAIINDFKHLGYSIDWTRRFTSADEFYQKFVQWQFRRLNEKGLVKQGRYPILYSLEDDNAVGEDDIKDGDTDKVTIEEYTAIFFRGKSFDLIAASLRPETIYGITNIWVNPDVKYVKVKISGRMAVVSEECSTKLKFQGNEIEVAGEASVQEIQKQTYTTPAGKEVKVYQADFVDPDNGTGIVYSVPSHSVYDYVYYRKKRGKDFPVIIEAPMKMKDIESKYDLETEEGREEATKDLYRNEFYYGKLVDSGPYTGMTVREAREAVKRDLISSGNAFTFYETSRHAVTRSGSKVIVAVLPDQWFLDYSQPWLKDLGHTMINTMTMHPEVYRNVMNDAIDWLKERPCARRRGLGTRLPFDDRWVIESLSDSTIYPAVYTNSIPLRSLYETGKLDDDAITRIFMNGEPKNEDESEAKRQFEYWYPVDIRLTAIPHISNHLSFYVLNHAAIFPKEKWPAGLIISGLVVSNGAKISKSKGNVVSLLEIAKKYSADIYRLYVAVQADISSTMDWNETDLASITRRFNEFKDLMAGFKQDTSDLTFEEAWFVARFSVRLRQFMESMDRYQIRDAYINIFYGVLNDLRYLSSRGGDVNRALTPVIADWLRALMPVIPHHAEEYWHSYVSDTYVSVDPFDENFQDRYERTVRRFGMTCDQMYSAMDYVEKVLQDVKNIMQVTGIEPKSVEITVANADVVRAAQEFLNNSVSGQSKKYMQYLAKRRKDIMIYGFDEYDVLQRNQVYLSKQIGCPVRIERGDVINGKIALPGKPVIYIS.

The 'HIGH' region signature appears at 50-60; the sequence is PYTNGSLHVGH. The short motif at 611-615 is the 'KMSKS' region element; it reads KISKS. K614 contributes to the ATP binding site.

The protein belongs to the class-I aminoacyl-tRNA synthetase family.

Its subcellular location is the cytoplasm. The enzyme catalyses tRNA(Leu) + L-leucine + ATP = L-leucyl-tRNA(Leu) + AMP + diphosphate. In Thermoplasma acidophilum (strain ATCC 25905 / DSM 1728 / JCM 9062 / NBRC 15155 / AMRC-C165), this protein is Leucine--tRNA ligase.